Consider the following 266-residue polypeptide: Small ribosomal subunit protein uS2 (266 aa).

This sequence belongs to the universal ribosomal protein uS2 family.

The protein is Small ribosomal subunit protein uS2 of Bartonella tribocorum (strain CIP 105476 / IBS 506).